The chain runs to 212 residues: Thymidylate kinase (212 aa).

11–18 (GGEGVGKS) contacts ATP.

This sequence belongs to the thymidylate kinase family.

It catalyses the reaction dTMP + ATP = dTDP + ADP. In terms of biological role, phosphorylation of dTMP to form dTDP in both de novo and salvage pathways of dTTP synthesis. The sequence is that of Thymidylate kinase from Chromohalobacter salexigens (strain ATCC BAA-138 / DSM 3043 / CIP 106854 / NCIMB 13768 / 1H11).